The chain runs to 206 residues: Threonine efflux protein (206 aa).

Residues 1–21 form a helical membrane-spanning segment; sequence MLMLFLTVAMVHIVALMSPGP. Topologically, residues 22–43 are periplasmic; it reads DFFFVSQTAVSRSRKEAMMGVL. Residues 44-64 form a helical membrane-spanning segment; the sequence is GITCGVMVWAGIALLGLHLII. Over 65–66 the chain is Cytoplasmic; it reads EK. Residues 67 to 87 traverse the membrane as a helical segment; the sequence is MAWLHTLIMVGGGLYLCWMGY. Residues 88–149 are Periplasmic-facing; that stretch reads QMLRGALKKE…VGDNVGTTAR (62 aa). Residues 150–173 traverse the membrane as a helical segment; the sequence is WGIFALIIVETLAWFTVVASLFAL. Over 174–206 the chain is Cytoplasmic; sequence PQMRRGYQRLAKWIDGFAGALFAGFGIHLIISR.

This sequence belongs to the Rht family.

The protein resides in the cell inner membrane. Functionally, conducts the efflux of threonine. The chain is Threonine efflux protein (rhtC) from Escherichia coli O157:H7.